A 248-amino-acid polypeptide reads, in one-letter code: Probable transcriptional regulatory protein PP_1214 (248 aa).

A disordered region spans residues 1 to 21; sequence MAGHSKWANIKHRKERQDAKR.

It belongs to the TACO1 family.

It localises to the cytoplasm. This Pseudomonas putida (strain ATCC 47054 / DSM 6125 / CFBP 8728 / NCIMB 11950 / KT2440) protein is Probable transcriptional regulatory protein PP_1214.